The sequence spans 129 residues: QECKCHGLSGSCTFTTCWKKMPHFREVGDRLLERFNGAFKVMGGNDGKTIIPVGHNIKPPDKQDLIYSAESPDFCQANRKTGSPGTRGRVCNSTALDVGGCDLLCCGRGQREETVVVEENCLCRFHWCC.

5 disulfide bridges follow: C3-C17, C5-C12, C75-C106, C91-C101, and C128-C129. S9 is lipidated: O-palmitoleoyl serine; by PORCN. A glycan (N-linked (GlcNAc...) asparagine) is linked at N92.

The protein belongs to the Wnt family. Post-translationally, palmitoleoylation is required for efficient binding to frizzled receptors. Depalmitoleoylation leads to Wnt signaling pathway inhibition. As to expression, at tailbud: dorsal, punctate; in adult: brain and heart.

The protein localises to the secreted. It is found in the extracellular space. It localises to the extracellular matrix. Ligand for members of the frizzled family of seven transmembrane receptors. Probable developmental protein. May be a signaling molecule which affects the development of discrete regions of tissues. Is likely to signal over only few cell diameters. The chain is Protein Wnt-6 (wnt6) from Xenopus laevis (African clawed frog).